The following is a 492-amino-acid chain: Adenosylhomocysteinase (492 aa).

Residues T68, D153, and E215 each contribute to the substrate site. Position 216-218 (216-218 (TTT)) interacts with NAD(+). Substrate-binding residues include K245 and D249. Residues N250, 279–284 (GYGDVG), E302, N337, 358–360 (IGH), and N406 contribute to the NAD(+) site.

The protein belongs to the adenosylhomocysteinase family. It depends on NAD(+) as a cofactor.

It localises to the cytoplasm. It carries out the reaction S-adenosyl-L-homocysteine + H2O = L-homocysteine + adenosine. The protein operates within amino-acid biosynthesis; L-homocysteine biosynthesis; L-homocysteine from S-adenosyl-L-homocysteine: step 1/1. In terms of biological role, may play a key role in the regulation of the intracellular concentration of adenosylhomocysteine. In Mycobacterium marinum (strain ATCC BAA-535 / M), this protein is Adenosylhomocysteinase.